The sequence spans 498 residues: Glycerol kinase (498 aa).

ADP is bound at residue Thr14. ATP is bound by residues Thr14 and Thr15. Thr14 provides a ligand contact to sn-glycerol 3-phosphate. Residue Arg18 participates in ADP binding. Sn-glycerol 3-phosphate contacts are provided by Arg84, Glu85, Tyr136, and Asp246. Glycerol is bound by residues Arg84, Glu85, Tyr136, Asp246, and Gln247. Positions 268 and 311 each coordinate ADP. Residues Thr268, Gly311, Gln315, and Gly412 each coordinate ATP. ADP is bound by residues Gly412 and Asn416.

It belongs to the FGGY kinase family.

The catalysed reaction is glycerol + ATP = sn-glycerol 3-phosphate + ADP + H(+). It functions in the pathway polyol metabolism; glycerol degradation via glycerol kinase pathway; sn-glycerol 3-phosphate from glycerol: step 1/1. Inhibited by fructose 1,6-bisphosphate (FBP). Key enzyme in the regulation of glycerol uptake and metabolism. Catalyzes the phosphorylation of glycerol to yield sn-glycerol 3-phosphate. The protein is Glycerol kinase of Leptospira biflexa serovar Patoc (strain Patoc 1 / Ames).